The sequence spans 112 residues: Nitrogen regulatory protein P-II 1 (112 aa).

Tyr51 carries the O-UMP-tyrosine modification.

The protein belongs to the P(II) protein family. In terms of assembly, homotrimer. Uridylylated/deuridylylated by GlnD.

Its function is as follows. P-II indirectly controls the transcription of the glutamine synthetase gene (GlnA). P-II prevents NR-II-catalyzed conversion of NR-I to NR-I-phosphate, the transcriptional activator of GlnA. When P-II is uridylylated to P-II-UMP, these events are reversed. When the ratio of Gln to 2-ketoglutarate decreases, P-II is uridylylated to P-II-UMP, which causes the deadenylation of glutamine synthetase by GlnE, so activating the enzyme. The chain is Nitrogen regulatory protein P-II 1 (glnB) from Escherichia coli O157:H7.